A 95-amino-acid polypeptide reads, in one-letter code: Nucleoid-associated protein MARTH_orf159 (95 aa).

This sequence belongs to the YbaB/EbfC family. As to quaternary structure, homodimer.

The protein resides in the cytoplasm. It is found in the nucleoid. Its function is as follows. Binds to DNA and alters its conformation. May be involved in regulation of gene expression, nucleoid organization and DNA protection. The sequence is that of Nucleoid-associated protein MARTH_orf159 from Metamycoplasma arthritidis (strain 158L3-1) (Mycoplasma arthritidis).